The chain runs to 201 residues: Regulator of G-protein signaling 16 (201 aa).

S-palmitoyl cysteine attachment occurs at residues C2 and C12. An RGS domain is found at 64 to 180 (SFDLLLNSKN…LKSPAYRDLA (117 aa)). Y167 is modified (phosphotyrosine; by EGFR). Y176 bears the Phosphotyrosine mark. Positions 181 to 201 (AQASATSTSAPSGSPAEPSHT) are disordered.

As to quaternary structure, interacts with GNAI1 and GNAQ. Interacts with GNAI3, GNAI3 and GNAO1. In terms of processing, palmitoylated on Cys-2 and/or Cys-12. Post-translationally, phosphorylated. Phosphorylation at Tyr-167 by EGFR enhances GTPase accelerating (GAP) activity toward GNAI1. Retinal; also predominantly expressed in the liver and pituitary.

It is found in the membrane. In terms of biological role, regulates G protein-coupled receptor signaling cascades. Inhibits signal transduction by increasing the GTPase activity of G protein alpha subunits, thereby driving them into their inactive GDP-bound form. Plays an important role in the phototransduction cascade by regulating the lifetime and effective concentration of activated transducin alpha. May regulate extra and intracellular mitogenic signals. This chain is Regulator of G-protein signaling 16 (Rgs16), found in Mus musculus (Mouse).